The primary structure comprises 247 residues: Neurotrophic factor BDNF precursor form (247 aa).

A signal peptide spans 1–18; sequence MTILFLTMVISYFGCMKA. Residues 19 to 128 constitute a propeptide that is removed on maturation; it reads APMKEASVRG…AANMSMRVRR (110 aa). N-linked (GlcNAc...) asparagine glycosylation is present at Asn-121. 3 disulfides stabilise this stretch: Cys-141–Cys-208, Cys-186–Cys-237, and Cys-196–Cys-239.

Belongs to the NGF-beta family. Monomers and homodimers. Binds to NTRK2/TRKB. Can form heterodimers with other neurotrophin family members, such as NTF3 and NTF4 (in vitro), but the physiological relevance of this is not clear. BDNF precursor form: interacts with the heterodimer formed by NGFR and SORCS2. Mature BDNF has much lower affinity for the heterodimer formed by NGFR and SORCS2. N-glycosylated and glycosulfated, contrary to mature BDNF. Post-translationally, mature BDNF is produced by proteolytic removal of the propeptide, catalyzed by a FURIN family member. In addition, the precursor form is proteolytically cleaved within the propeptide, but this is not an obligatory intermediate for the production of mature BDNF. Can be converted into mature BDNF by plasmin (PLG).

The protein localises to the secreted. Its function is as follows. Important signaling molecule that activates signaling cascades downstream of NTRK2. During development, promotes the survival and differentiation of selected neuronal populations of the peripheral and central nervous systems. Participates in axonal growth, pathfinding and in the modulation of dendritic growth and morphology. Major regulator of synaptic transmission and plasticity at adult synapses in many regions of the CNS. The versatility of BDNF is emphasized by its contribution to a range of adaptive neuronal responses including long-term potentiation (LTP), long-term depression (LTD), certain forms of short-term synaptic plasticity, as well as homeostatic regulation of intrinsic neuronal excitability. This Canis lupus familiaris (Dog) protein is Neurotrophic factor BDNF precursor form (BDNF).